Consider the following 301-residue polypeptide: Prohibitin-2 (301 aa).

Necessary for transcriptional repression stretches follow at residues 19-49 (VGTA…GQRA) and 150-174 (ASQL…RAKD). Positions 190–237 (SREYTAAVEAKQVAQQEAQRAQFLVEKAKQEQKQKIVQAEGEATAAKM) form a coiled coil.

Belongs to the prohibitin family. As to quaternary structure, the mitochondrial prohibitin complex consists of two subunits (PHB1 and PHB2), assembled into a membrane-associated ring-shaped supercomplex of approximately 1 mDa.

It localises to the mitochondrion inner membrane. The protein localises to the cytoplasm. The protein resides in the nucleus. It is found in the cell membrane. Protein with pleiotropic attributes mediated in a cell-compartment- and tissue-specific manner, which include the plasma membrane-associated cell signaling functions, mitochondrial chaperone, and transcriptional co-regulator of transcription factors and sex steroid hormones in the nucleus. In terms of biological role, in the mitochondria, together with PHB, forms large ring complexes (prohibitin complexes) in the inner mitochondrial membrane (IMM) and functions as a chaperone protein that stabilizes mitochondrial respiratory enzymes and maintains mitochondrial integrity in the IMM, which is required for mitochondrial morphogenesis, neuronal survival, and normal lifespan. Functionally, in the nucleus, serves as transcriptional co-regulator. The polypeptide is Prohibitin-2 (PHB2) (Gallus gallus (Chicken)).